The sequence spans 190 residues: Female-specific histamine-binding protein 2 (190 aa).

The N-terminal stretch at 1–19 is a signal peptide; sequence MKLLILSLALVLALSQVKG. Positions 39, 43, 55, 58, 61, 101, 117, 119, 127, 139, 154, and 156 each coordinate histamine. Disulfide bonds link C67–C188 and C138–C167.

It belongs to the calycin superfamily. Histamine-binding salivary protein family. As to quaternary structure, monomer. As to expression, expressed in salivary glands.

Its subcellular location is the secreted. Salivary tick protein that acts by scavenging histamine at the wound site, outcompeting histamine receptors for histamine, thereby overcoming host inflammatory responses. Binds histamine with a high-affinity (Kd=1.7 nM). Contains two binding histamine sites (H and L), that appear to bind histamine with differing affinities (high and low). The polypeptide is Female-specific histamine-binding protein 2 (Rhipicephalus appendiculatus (Brown ear tick)).